The primary structure comprises 1017 residues: DNA polymerase (1017 aa).

It belongs to the DNA polymerase type-B family. Heterodimer with the terminal protein; this heterodimer binds to bp 9 to 18 of the genome. Forms a complex with viral pTP, DBP and hosts NFIA and POU2F1/OCT1 for initiation of replication.

The protein resides in the host nucleus. The enzyme catalyses DNA(n) + a 2'-deoxyribonucleoside 5'-triphosphate = DNA(n+1) + diphosphate. Eukaryotic-type DNA polymerase involved in viral genomic replication. DNA synthesis is protein primed, and acts in a strand displacement replication. Assembles in complex with viral pTP, DBP, host NFIA and host POU2F1/OCT1 on viral origin of replication. The polymerase covalently transfers dCMP onto pTP, thereby initiating complementary strand synthesis. This is DNA polymerase from Bovine adenovirus 2 (BAdV-2).